We begin with the raw amino-acid sequence, 213 residues long: Orotidine 5'-phosphate decarboxylase (213 aa).

Substrate is bound by residues Asp-11, Lys-33, 61 to 70, Ser-113, 166 to 176, Gly-189, and Arg-190; these read DLKLADIPNT and PGVGAQGGKAS. The Proton donor role is filled by Lys-63.

Belongs to the OMP decarboxylase family. Type 1 subfamily. As to quaternary structure, homodimer.

It carries out the reaction orotidine 5'-phosphate + H(+) = UMP + CO2. It functions in the pathway pyrimidine metabolism; UMP biosynthesis via de novo pathway; UMP from orotate: step 2/2. In terms of biological role, catalyzes the decarboxylation of orotidine 5'-monophosphate (OMP) to uridine 5'-monophosphate (UMP). This chain is Orotidine 5'-phosphate decarboxylase, found in Thermococcus kodakarensis (strain ATCC BAA-918 / JCM 12380 / KOD1) (Pyrococcus kodakaraensis (strain KOD1)).